Reading from the N-terminus, the 154-residue chain is 6,7-dimethyl-8-ribityllumazine synthase (154 aa).

5-amino-6-(D-ribitylamino)uracil is bound by residues phenylalanine 23, 57 to 59, and 81 to 83; these read AFE and AVI. 86–87 serves as a coordination point for (2S)-2-hydroxy-3-oxobutyl phosphate; sequence ST. The Proton donor role is filled by histidine 89. Phenylalanine 114 serves as a coordination point for 5-amino-6-(D-ribitylamino)uracil. Position 128 (arginine 128) interacts with (2S)-2-hydroxy-3-oxobutyl phosphate.

This sequence belongs to the DMRL synthase family.

It catalyses the reaction (2S)-2-hydroxy-3-oxobutyl phosphate + 5-amino-6-(D-ribitylamino)uracil = 6,7-dimethyl-8-(1-D-ribityl)lumazine + phosphate + 2 H2O + H(+). It functions in the pathway cofactor biosynthesis; riboflavin biosynthesis; riboflavin from 2-hydroxy-3-oxobutyl phosphate and 5-amino-6-(D-ribitylamino)uracil: step 1/2. Functionally, catalyzes the formation of 6,7-dimethyl-8-ribityllumazine by condensation of 5-amino-6-(D-ribitylamino)uracil with 3,4-dihydroxy-2-butanone 4-phosphate. This is the penultimate step in the biosynthesis of riboflavin. The protein is 6,7-dimethyl-8-ribityllumazine synthase of Syntrophotalea carbinolica (strain DSM 2380 / NBRC 103641 / GraBd1) (Pelobacter carbinolicus).